The sequence spans 457 residues: tRNA-2-methylthio-N(6)-dimethylallyladenosine synthase (457 aa).

Residues 3–120 enclose the MTTase N-terminal domain; that stretch reads KKVYVKTFGC…LPQMIDARRA (118 aa). C12, C49, C83, C157, C161, and C164 together coordinate [4Fe-4S] cluster. Positions 143–377 constitute a Radical SAM core domain; it reads RVEGPSAFVS…QATIEENVAR (235 aa). A TRAM domain is found at 380-447; it reads QSMVGKVERI…PHSLRGELVL (68 aa).

This sequence belongs to the methylthiotransferase family. MiaB subfamily. As to quaternary structure, monomer. Requires [4Fe-4S] cluster as cofactor.

The protein resides in the cytoplasm. It carries out the reaction N(6)-dimethylallyladenosine(37) in tRNA + (sulfur carrier)-SH + AH2 + 2 S-adenosyl-L-methionine = 2-methylsulfanyl-N(6)-dimethylallyladenosine(37) in tRNA + (sulfur carrier)-H + 5'-deoxyadenosine + L-methionine + A + S-adenosyl-L-homocysteine + 2 H(+). Functionally, catalyzes the methylthiolation of N6-(dimethylallyl)adenosine (i(6)A), leading to the formation of 2-methylthio-N6-(dimethylallyl)adenosine (ms(2)i(6)A) at position 37 in tRNAs that read codons beginning with uridine. This Burkholderia cenocepacia (strain HI2424) protein is tRNA-2-methylthio-N(6)-dimethylallyladenosine synthase.